The following is a 133-amino-acid chain: Small ribosomal subunit protein uS9 (133 aa).

Over residues 97–113 (SKQELKSHGFLTRDPRK) the composition is skewed to basic and acidic residues. Positions 97-133 (SKQELKSHGFLTRDPRKKERKKYGHKKARKSFQFSKR) are disordered. Over residues 114 to 133 (KERKKYGHKKARKSFQFSKR) the composition is skewed to basic residues.

Belongs to the universal ribosomal protein uS9 family.

This chain is Small ribosomal subunit protein uS9, found in Chlamydia abortus (strain DSM 27085 / S26/3) (Chlamydophila abortus).